Consider the following 379-residue polypeptide: 2-nitroimidazole nitrohydrolase (379 aa).

Cys357 functions as the Amidino-cysteine intermediate in the catalytic mechanism.

It belongs to the arginine deiminase family.

It catalyses the reaction 2-nitroimidazole + H2O = 1,3-dihydro-2H-imidazol-2-one + nitrite + H(+). In terms of biological role, involved in the biodegradation of 2-Nitroimidazole (2NI) which is a natural antibiotic and an analog of the synthetic nitroimidazoles used for treatment of tuberculosis, Chagas disease (also called American Trypanosomiasis) and cancer. Catalyzes the hydrolytic denitration of 2NI to produce imidazol-2-one and nitrite. It is also active against the 2NI synthetic derivative benznidazole. NnhA confers drug resistance to 2NI. This is 2-nitroimidazole nitrohydrolase (nnhA) from Mycobacterium sp. (strain JS330).